We begin with the raw amino-acid sequence, 470 residues long: Dynein axonemal assembly factor 11 (470 aa).

4 LRR repeats span residues isoleucine 20 to cysteine 43, arginine 44 to leucine 65, lysine 66 to serine 89, and leucine 90 to glutamine 110. In terms of domain architecture, LRRCT spans tyrosine 128–aspartate 146. Residues leucine 177–lysine 288 are a coiled coil. Positions alanine 182 to glutamate 265 are disordered. Over residues lysine 194–tyrosine 213 the composition is skewed to basic and acidic residues. In terms of domain architecture, CS spans valine 303–lysine 395. The interval histidine 447 to valine 470 is disordered.

It belongs to the tilB family.

It localises to the cytoplasm. The protein localises to the cell projection. The protein resides in the cilium. It is found in the dynein axonemal particle. Its subcellular location is the flagellum. Its function is as follows. Involved in dynein arm assembly, is important for expression and transporting outer dynein arm (ODA) proteins from the cytoplasm to the cilia. The sequence is that of Dynein axonemal assembly factor 11 (dnaaf11) from Xenopus tropicalis (Western clawed frog).